The sequence spans 345 residues: Dihydroorotate dehydrogenase (quinone) (345 aa).

Residues 65-69 and threonine 89 each bind FMN; that span reads AGLDK. Lysine 69 provides a ligand contact to substrate. 114 to 118 serves as a coordination point for substrate; sequence NRMGF. Asparagine 142 and asparagine 175 together coordinate FMN. Residue asparagine 175 participates in substrate binding. Serine 178 acts as the Nucleophile in catalysis. Asparagine 180 is a binding site for substrate. FMN is bound by residues lysine 220 and threonine 248. 249 to 250 serves as a coordination point for substrate; that stretch reads NT. FMN is bound by residues glycine 271, glycine 300, and 321–322; that span reads YT.

This sequence belongs to the dihydroorotate dehydrogenase family. Type 2 subfamily. In terms of assembly, monomer. Requires FMN as cofactor.

It is found in the cell membrane. The catalysed reaction is (S)-dihydroorotate + a quinone = orotate + a quinol. It participates in pyrimidine metabolism; UMP biosynthesis via de novo pathway; orotate from (S)-dihydroorotate (quinone route): step 1/1. In terms of biological role, catalyzes the conversion of dihydroorotate to orotate with quinone as electron acceptor. The protein is Dihydroorotate dehydrogenase (quinone) of Burkholderia ambifaria (strain ATCC BAA-244 / DSM 16087 / CCUG 44356 / LMG 19182 / AMMD) (Burkholderia cepacia (strain AMMD)).